We begin with the raw amino-acid sequence, 798 residues long: uncharacterized protein (798 aa).

A compositionally biased stretch (low complexity) spans 1 to 13 (MSSSQSPSTPSAS). A chloroplast-targeting transit peptide spans 1–58 (MSSSQSPSTPSASLVDSSDSKHPDDLPQIYKRRSVWTSSEDAVSSSNSPEQTTPFTVR). Disordered stretches follow at residues 1–99 (MSSS…WQDA), 135–158 (AEKK…SMCT), and 417–473 (TGLI…AEPS). A compositionally biased stretch (polar residues) spans 35–55 (VWTSSEDAVSSSNSPEQTTPF). Basic and acidic residues predominate over residues 57 to 79 (VREDTNADIARELDLPDDPEPHL). Residues 137–146 (KKKRKKKKKA) show a composition bias toward basic residues. The span at 462 to 473 (AAPAEAQGAEPS) shows a compositional bias: low complexity. Residues 578-658 (RSNMEVAGKL…MLSEARGLRD (81 aa)) are a coiled coil. A disordered region spans residues 749–798 (DDLKAPAPEPAPLSPGGHRSVESLADEAGITDQAGSLLPAKDNRPSEDLD). Residue serine 762 is modified to Phosphoserine. The span at 789-798 (KDNRPSEDLD) shows a compositional bias: basic and acidic residues.

It localises to the plastid. The protein localises to the chloroplast. This is an uncharacterized protein from Arabidopsis thaliana (Mouse-ear cress).